The primary structure comprises 314 residues: Short-chain dehydrogenase/reductase sthC (314 aa).

Residues methionine 1 to valine 10 show a composition bias toward polar residues. The tract at residues methionine 1–methionine 27 is disordered. NADP(+) contacts are provided by valine 56, lysine 80, aspartate 105, asparagine 132, and arginine 167. Serine 191 (proton donor) is an active-site residue. 2 residues coordinate NADP(+): tyrosine 222 and lysine 226. Catalysis depends on tyrosine 222, which acts as the Proton acceptor. Lysine 226 functions as the Lowers pKa of active site Tyr in the catalytic mechanism.

Belongs to the short-chain dehydrogenases/reductases (SDR) family.

The enzyme catalyses dehydroprobetaenone I + AH2 = probetaenone I + A. It carries out the reaction betaenone C + AH2 = betaenone B + A. The protein operates within mycotoxin biosynthesis. Short-chain dehydrogenase/reductase; part of the gene cluster that mediates the biosynthesis of the phytotoxin stemphyloxin II. The first step of the pathway is the synthesis of dehydroprobetaenone I by the polyketide synthase sthA and the enoyl reductase sthE via condensation of one acetyl-CoA starter unit with 7 malonyl-CoA units and 5 methylations. The C-terminal reductase (R) domain of sthA catalyzes the reductive release of the polyketide chain. Because sthA lacks a designated enoylreductase (ER) domain, the required activity is provided the enoyl reductase sthE. The short-chain dehydrogenase/reductase sthC then catalyzes reduction of dehydroprobetaenone I to probetaenone I. The cytochrome P450 monooxygenase sthF catalyzes successive epoxidation, oxidation (resulting from epoxide opening) and hydroxylation to install a tertiary alcohol in the decaline ring to yield betaenone C from dehydroprobetaenone I and betaenone B from probetaenone I. The FAD-linked oxidoreductase sthB is responsible for the conversion of betaenone C to betaenone A via an intramolecular aldol reaction between C-1 and C-17 to form the bridged tricyclic system in betaenone A. Finally, the cytochrome P450 monooxygenase sthD catalyzes the hydroxylation of C-15 to afford the final metabolite stemphyloxin II. In Phaeosphaeria nodorum (strain SN15 / ATCC MYA-4574 / FGSC 10173) (Glume blotch fungus), this protein is Short-chain dehydrogenase/reductase sthC.